The sequence spans 348 residues: Probable protein phosphatase 2C 35 (348 aa).

The segment covering 11–24 (RYPSSSSDGDSRGP) has biased composition (low complexity). The interval 11 to 40 (RYPSSSSDGDSRGPLEANGVLKGKDQKPLG) is disordered. A PPM-type phosphatase domain is found at 52–342 (VYSVLSQRGY…DDITIIIVQI (291 aa)). Aspartate 93, glycine 94, aspartate 289, and aspartate 333 together coordinate Mn(2+).

The protein belongs to the PP2C family. It depends on Mg(2+) as a cofactor. The cofactor is Mn(2+).

The catalysed reaction is O-phospho-L-seryl-[protein] + H2O = L-seryl-[protein] + phosphate. It catalyses the reaction O-phospho-L-threonyl-[protein] + H2O = L-threonyl-[protein] + phosphate. This Arabidopsis thaliana (Mouse-ear cress) protein is Probable protein phosphatase 2C 35.